Reading from the N-terminus, the 1058-residue chain is Protein translocase subunit SECA2, chloroplastic (1058 aa).

A chloroplast-targeting transit peptide spans 1–58; the sequence is MGSVSNLVSPNICHPAPPCLTSRSNKFPWTKPISGLLFYRSVTPIKRCHLVRRSCVVS. ATP is bound at residue 167 to 174; sequence MKTGEGKT.

It belongs to the SecA family. In terms of assembly, part of a second Sec protein translocation apparatus. Interacts probably with SCY2.

It localises to the plastid. The protein resides in the chloroplast membrane. The catalysed reaction is ATP + H2O + chloroplast-proteinSide 1 = ADP + phosphate + chloroplast-proteinSide 2.. Its function is as follows. Involved in protein export. Probably interacts with other proteins to allow the postimport or conservative sorting pathway for inner membrane proteins in plastids. May have a central role in coupling the hydrolysis of ATP to the transfer of proteins across the membrane. This chain is Protein translocase subunit SECA2, chloroplastic, found in Arabidopsis thaliana (Mouse-ear cress).